The sequence spans 488 residues: Membrane-bound lytic murein transglycosylase F (488 aa).

The N-terminal stretch at 1-25 (MFARPAIRMRCATGLLAIGTLLMLA) is a signal peptide. A non-LT domain region spans residues 26-269 (GCGEEPKPSV…RLKERYYGHV (244 aa)). Residues 270–488 (DVLGYVGAYT…RTLDEQTPPL (219 aa)) are LT domain. Glu-316 is an active-site residue.

It in the N-terminal section; belongs to the bacterial solute-binding protein 3 family. The protein in the C-terminal section; belongs to the transglycosylase Slt family.

It localises to the cell outer membrane. The catalysed reaction is Exolytic cleavage of the (1-&gt;4)-beta-glycosidic linkage between N-acetylmuramic acid (MurNAc) and N-acetylglucosamine (GlcNAc) residues in peptidoglycan, from either the reducing or the non-reducing ends of the peptidoglycan chains, with concomitant formation of a 1,6-anhydrobond in the MurNAc residue.. Functionally, murein-degrading enzyme that degrades murein glycan strands and insoluble, high-molecular weight murein sacculi, with the concomitant formation of a 1,6-anhydromuramoyl product. Lytic transglycosylases (LTs) play an integral role in the metabolism of the peptidoglycan (PG) sacculus. Their lytic action creates space within the PG sacculus to allow for its expansion as well as for the insertion of various structures such as secretion systems and flagella. This chain is Membrane-bound lytic murein transglycosylase F, found in Ectopseudomonas mendocina (strain ymp) (Pseudomonas mendocina).